The chain runs to 469 residues: MDLQLTTNSTDSGDRGGSSNESLQRQPPSQYSPAEVAGLAAVVSFLIVFTIVGNVLVVIAVLTSRALKAPQNLFQVSLASADILVATLVMPFSLANELMNYWYFGKVWCVIYLALDVLFCTSSIVHLCAISLDRYWSVTQAVEYNLKRTPRRIKGIIVTVWLISAVISFPPLISLYRDPEDDLYPQCELNDETWYILSSCIGSFFAPCIIMVLVYVRIYRVAKLRTRTLSEKRTVPEGSSQTENGLSRPPVGAGPSTAAAAAASLRLQAGENGHYHLHHHHHHLHHHHHHHHHQLRKSAELEDIELEESSTSENRRRRRSREEAAARKGSRGFSFSFSSTKGGQSAGAGSRLSRASNRSLEFFSTHRRRKRSSLCRRKVTQAREKRFTFVLAVVMGVFVVCWFPFFFTYSLYGICREACQVPETLFKFFFWIGYCNSSLNPVIYTIFNQDFRRSFKHILFKKKKKTSLQ.

Positions 1 to 29 (MDLQLTTNSTDSGDRGGSSNESLQRQPPS) are disordered. Residues 1–36 (MDLQLTTNSTDSGDRGGSSNESLQRQPPSQYSPAEV) are Extracellular-facing. Residues asparagine 8 and asparagine 20 are each glycosylated (N-linked (GlcNAc...) asparagine). Residues 37-62 (AGLAAVVSFLIVFTIVGNVLVVIAVL) form a helical membrane-spanning segment. Topologically, residues 63–73 (TSRALKAPQNL) are cytoplasmic. A helical membrane pass occupies residues 74–99 (FQVSLASADILVATLVMPFSLANELM). The Extracellular segment spans residues 100-109 (NYWYFGKVWC). Cysteine 109 and cysteine 187 are disulfide-bonded. A helical transmembrane segment spans residues 110-132 (VIYLALDVLFCTSSIVHLCAISL). The Cytoplasmic portion of the chain corresponds to 133 to 154 (DRYWSVTQAVEYNLKRTPRRIK). Residues 155–175 (GIIVTVWLISAVISFPPLISL) traverse the membrane as a helical segment. Over 176-194 (YRDPEDDLYPQCELNDETW) the chain is Extracellular. A helical transmembrane segment spans residues 195-216 (YILSSCIGSFFAPCIIMVLVYV). The Cytoplasmic portion of the chain corresponds to 217–386 (RIYRVAKLRT…RKVTQAREKR (170 aa)). Disordered regions lie at residues 232-261 (KRTV…AAAA) and 279-353 (HHHH…SRLS). The segment covering 279 to 296 (HHHHHLHHHHHHHHHQLR) has biased composition (basic residues). Residues 301 to 310 (LEDIELEESS) are compositionally biased toward acidic residues. Positions 331-353 (RGFSFSFSSTKGGQSAGAGSRLS) are enriched in low complexity. A helical membrane pass occupies residues 387–407 (FTFVLAVVMGVFVVCWFPFFF). Residues 408–427 (TYSLYGICREACQVPETLFK) lie on the Extracellular side of the membrane. The helical transmembrane segment at 428–448 (FFFWIGYCNSSLNPVIYTIFN) threads the bilayer. The Cytoplasmic segment spans residues 449-469 (QDFRRSFKHILFKKKKKTSLQ).

The protein belongs to the G-protein coupled receptor 1 family. Adrenergic receptor subfamily. ADRA2C sub-subfamily.

It localises to the cell membrane. Its function is as follows. Alpha-2 adrenergic receptors mediate the catecholamine-induced inhibition of adenylate cyclase through the action of G proteins. This Didelphis virginiana (North American opossum) protein is Alpha-2C adrenergic receptor (ADRA2C).